A 293-amino-acid polypeptide reads, in one-letter code: Insulin-like growth factor-binding protein 3 (293 aa).

The first 27 residues, 1-27 (MQRARPALWAAALIALALLRGPPAARA), serve as a signal peptide directing secretion. Positions 36-119 (PVVRCEPCDA…LDGRGICANA (84 aa)) constitute an IGFBP N-terminal domain. 6 disulfide bridges follow: Cys40/Cys69, Cys43/Cys71, Cys51/Cys72, Cys60/Cys75, Cys83/Cys96, and Cys90/Cys116. N-linked (GlcNAc...) asparagine glycans are attached at residues Asn118 and Asn138. Disordered regions lie at residues 132-166 (APPA…PDSK) and 178-213 (KKGH…TEYG). Ser150 is modified (phosphoserine). The span at 178–192 (KKGHAKDSQRYKVDY) shows a compositional bias: basic and acidic residues. Residues 193–204 (ESQSTDTQNFSS) are compositionally biased toward polar residues. Asn201 carries an N-linked (GlcNAc...) asparagine glycan. Ser203 carries the phosphoserine modification. Residues 212–287 (YGPCRREMED…DVKGKGDVHC (76 aa)) form the Thyroglobulin type-1 domain. Cystine bridges form between Cys215–Cys242, Cys253–Cys264, and Cys266–Cys287.

In terms of assembly, interacts with XLKD1. Binds IGF2 more than IGF1. Forms a ternary complex of about 140 to 150 kDa with IGF1 or IGF2 and a 85 kDa glycoprotein (ALS). Interacts with humanin; humanin competes with importin KPNB1 for binding to IGFBP3, blocking IGFBP3 nuclear import and IGFBP3-mediated apoptosis. Interacts with TMEM219. Interacts with RXRA; this interaction modulates the transcriptional activity of RXRA. Interacts with LRP1; this interaction mediates cell growth inhibition independent of IGF1. Phosphorylated by FAM20C in the extracellular medium. Phosphorylated by CK2; resulting in decreased nuclear localization.

Its subcellular location is the secreted. It is found in the nucleus. Functionally, multifunctional protein that plays a critical role in regulating the availability of IGFs such as IGF1 and IGF2 to their receptors and thereby regulates IGF-mediated cellular processes including proliferation, differentiation, and apoptosis in a cell-type specific manner. Also exhibits IGF-independent antiproliferative and apoptotic effects mediated by its receptor TMEM219/IGFBP-3R. Inhibits the positive effect of humanin on insulin sensitivity. Promotes testicular germ cell apoptosis. Acts via LRP-1/alpha2M receptor, also known as TGF-beta type V receptor, to mediate cell growth inhibition independent of IGF1. Mechanistically, induces serine-specific dephosphorylation of IRS1 or IRS2 upon ligation to its receptor, leading to the inhibitory cascade. In the nucleus, interacts with transcription factors such as retinoid X receptor-alpha/RXRA to regulate transcriptional signaling and apoptosis. The polypeptide is Insulin-like growth factor-binding protein 3 (IGFBP3) (Sus scrofa (Pig)).